The sequence spans 150 residues: Endoribonuclease YbeY (150 aa).

Residues His116, His120, and His126 each coordinate Zn(2+).

This sequence belongs to the endoribonuclease YbeY family. The cofactor is Zn(2+).

Its subcellular location is the cytoplasm. Its function is as follows. Single strand-specific metallo-endoribonuclease involved in late-stage 70S ribosome quality control and in maturation of the 3' terminus of the 16S rRNA. The chain is Endoribonuclease YbeY from Beutenbergia cavernae (strain ATCC BAA-8 / DSM 12333 / CCUG 43141 / JCM 11478 / NBRC 16432 / NCIMB 13614 / HKI 0122).